A 522-amino-acid polypeptide reads, in one-letter code: Neutral amino acid uniporter 4 (522 aa).

Transmembrane regions (helical) follow at residues 115 to 135, 181 to 201, 226 to 246, 255 to 275, 293 to 313, 329 to 349, 377 to 397, 409 to 429, 435 to 455, and 467 to 487; these read AGVL…IHCM, LVDW…FVFL, SLDL…LVFI, LSFF…QYVI, YPLF…VLPL, IGMA…YFCF, FGIY…ILPA, LCEF…AVLI, VISF…PPLV, and PWVI…FIAG. Asparagine 515 carries N-linked (GlcNAc...) asparagine glycosylation.

The protein belongs to the amino acid/polyamine transporter 2 family.

Its subcellular location is the lysosome membrane. The enzyme catalyses L-tryptophan(in) = L-tryptophan(out). It carries out the reaction L-alanine(in) = L-alanine(out). It catalyses the reaction L-proline(in) = L-proline(out). Uniporter that mediates the transport of neutral amino acids like L-tryptophan, proline and alanine. The transport activity is sodium ions-independent, electroneutral and therefore functions via facilitated diffusion. The polypeptide is Neutral amino acid uniporter 4 (Xenopus laevis (African clawed frog)).